A 1068-amino-acid chain; its full sequence is Carbamoyl phosphate synthase large chain (1068 aa).

Residues 1-401 (MPLNKDIKKV…AFLKGTRSLE (401 aa)) form a carboxyphosphate synthetic domain region. ATP contacts are provided by arginine 129, arginine 169, glycine 175, glycine 176, lysine 208, valine 210, glutamate 215, glycine 241, isoleucine 242, histidine 243, glutamine 284, and glutamate 298. In terms of domain architecture, ATP-grasp 1 spans 133–327 (RNVMSRINEP…IAKVASKIAL (195 aa)). Glutamine 284, glutamate 298, and asparagine 300 together coordinate Mg(2+). 3 residues coordinate Mn(2+): glutamine 284, glutamate 298, and asparagine 300. Residues 402–549 (IGKYSLEHKK…YSTYDVYDEV (148 aa)) form an oligomerization domain region. A carbamoyl phosphate synthetic domain region spans residues 550 to 932 (EVSKNKKVIV…ALYKGFIGAN (383 aa)). The ATP-grasp 2 domain occupies 674 to 864 (DELLEKLKIA…IVDIATRVML (191 aa)). 10 residues coordinate ATP: arginine 710, lysine 749, leucine 751, glutamate 755, glycine 780, valine 781, histidine 782, serine 783, glutamine 823, and glutamate 835. The Mg(2+) site is built by glutamine 823, glutamate 835, and asparagine 837. The Mn(2+) site is built by glutamine 823, glutamate 835, and asparagine 837. An MGS-like domain is found at 933 to 1068 (ISIKKEKGTV…ETLYIFDLSN (136 aa)). Positions 933 to 1068 (ISIKKEKGTV…ETLYIFDLSN (136 aa)) are allosteric domain.

It belongs to the CarB family. In terms of assembly, composed of two chains; the small (or glutamine) chain promotes the hydrolysis of glutamine to ammonia, which is used by the large (or ammonia) chain to synthesize carbamoyl phosphate. Tetramer of heterodimers (alpha,beta)4. Mg(2+) is required as a cofactor. Mn(2+) serves as cofactor.

It carries out the reaction hydrogencarbonate + L-glutamine + 2 ATP + H2O = carbamoyl phosphate + L-glutamate + 2 ADP + phosphate + 2 H(+). The enzyme catalyses hydrogencarbonate + NH4(+) + 2 ATP = carbamoyl phosphate + 2 ADP + phosphate + 2 H(+). The protein operates within amino-acid biosynthesis; L-arginine biosynthesis; carbamoyl phosphate from bicarbonate: step 1/1. It functions in the pathway pyrimidine metabolism; UMP biosynthesis via de novo pathway; (S)-dihydroorotate from bicarbonate: step 1/3. In terms of biological role, large subunit of the glutamine-dependent carbamoyl phosphate synthetase (CPSase). CPSase catalyzes the formation of carbamoyl phosphate from the ammonia moiety of glutamine, carbonate, and phosphate donated by ATP, constituting the first step of 2 biosynthetic pathways, one leading to arginine and/or urea and the other to pyrimidine nucleotides. The large subunit (synthetase) binds the substrates ammonia (free or transferred from glutamine from the small subunit), hydrogencarbonate and ATP and carries out an ATP-coupled ligase reaction, activating hydrogencarbonate by forming carboxy phosphate which reacts with ammonia to form carbamoyl phosphate. In Clostridium botulinum (strain Langeland / NCTC 10281 / Type F), this protein is Carbamoyl phosphate synthase large chain.